The sequence spans 69 residues: Purkinje cell protein 4-like protein 1 (69 aa).

Residues 1-15 are compositionally biased toward polar residues; it reads MSELNTKTSPATNQA. A disordered region spans residues 1–47; sequence MSELNTKTSPATNQAPGPEEKGKAGSAKKTEDEEEEIDIDLTAPETE. A Phosphothreonine modification is found at T8. Positions 18–31 are enriched in basic and acidic residues; the sequence is PEEKGKAGSAKKTE. Residues 46–69 form the IQ domain; it reads TEKAALAIQGKFRRFQKRKKDPSS.

It belongs to the PCP4 family.

The sequence is that of Purkinje cell protein 4-like protein 1 (PCP4L1) from Bos taurus (Bovine).